Consider the following 1106-residue polypeptide: Platelet-derived growth factor receptor beta (1106 aa).

The signal sequence occupies residues 1-32; sequence MRLPGAMPALALKGELLLLSLLLLLEPQISQG. Ig-like C2-type domains are found at residues 33-120, 129-210, 214-309, 331-403, and 416-524; these read LVVT…YIFV, PNDA…YRLQ, INVS…INIT, HRSR…HEDA, and PVRV…VIVV. At 33–532 the chain is on the extracellular side; that stretch reads LVVTPPGPEL…VVPHSLPFKV (500 aa). N-linked (GlcNAc...) asparagine glycans are attached at residues asparagine 45, asparagine 89, and asparagine 103. Residues cysteine 54 and cysteine 100 are joined by a disulfide bond. Cysteine 149 and cysteine 190 are oxidised to a cystine. Asparagine 215 and asparagine 230 each carry an N-linked (GlcNAc...) asparagine glycan. Cysteine 235 and cysteine 291 are oxidised to a cystine. N-linked (GlcNAc...) asparagine glycosylation is found at asparagine 292, asparagine 307, asparagine 354, asparagine 371, asparagine 468, and asparagine 479. Cysteine 436 and cysteine 508 are joined by a disulfide. The chain crosses the membrane as a helical span at residues 533–553; sequence VVISAILALVVLTIISLIILI. Residues 554–1106 are Cytoplasmic-facing; it reads MLWQKKPRYE…PRAEAEDSFL (553 aa). Phosphotyrosine; by autocatalysis is present on residues tyrosine 562, tyrosine 579, and tyrosine 581. One can recognise a Protein kinase domain in the interval 600–962; that stretch reads LVLGRTLGSG…QLVLLLERLL (363 aa). ATP is bound by residues 606 to 614 and lysine 634; that span reads LGSGAFGQV. Tyrosine 686 carries the phosphotyrosine; by ABL1 and ABL2 modification. Residues tyrosine 716, tyrosine 740, tyrosine 751, tyrosine 763, tyrosine 771, tyrosine 775, and tyrosine 778 each carry the phosphotyrosine; by autocatalysis modification. The Proton acceptor role is filled by aspartate 826. The residue at position 857 (tyrosine 857) is a Phosphotyrosine; by autocatalysis. Residues tyrosine 934 and tyrosine 970 each carry the phosphotyrosine; by ABL1 and ABL2 modification. Residues tyrosine 1009 and tyrosine 1021 each carry the phosphotyrosine; by autocatalysis modification. Residues 1019–1106 are disordered; that stretch reads NDYIIPLPDP…PRAEAEDSFL (88 aa). Over residues 1043 to 1060 the composition is skewed to polar residues; sequence SLASSTLNEVNTSSTISC. Residues 1066–1088 show a composition bias toward acidic residues; that stretch reads PQDEPEPEPQLELQVEPEPELEQ.

This sequence belongs to the protein kinase superfamily. Tyr protein kinase family. CSF-1/PDGF receptor subfamily. Interacts with homodimeric PDGFB and PDGFD, and with heterodimers formed by PDGFA and PDGFB. May also interact with homodimeric PDGFC. Monomer in the absence of bound ligand. Interaction with homodimeric PDGFB, heterodimers formed by PDGFA and PDGFB or homodimeric PDGFD, leads to receptor dimerization, where both PDGFRA homodimers and heterodimers with PDGFRB are observed. Interacts with SH2B2/APS. Interacts directly (tyrosine phosphorylated) with SHB. Interacts (tyrosine phosphorylated) with PIK3R1 and RASA1. Interacts (tyrosine phosphorylated) with CBL. Interacts (tyrosine phosphorylated) with SRC and SRC family kinases. Interacts (tyrosine phosphorylated) with PIK3C2B, maybe indirectly. Interacts (tyrosine phosphorylated) with SHC1, GRB7, GRB10 and NCK1. Interaction with GRB2 is mediated by SHC1. Interacts (via C-terminus) with NHERF1. In terms of processing, autophosphorylated on tyrosine residues upon ligand binding. Autophosphorylation occurs in trans, i.e. one subunit of the dimeric receptor phosphorylates tyrosine residues on the other subunit. Phosphorylation at Tyr-579, and to a lesser degree, at Tyr-581, is important for interaction with SRC family kinases. Phosphorylation at Tyr-740 and Tyr-751 is important for interaction with PIK3R1. Phosphorylation at Tyr-751 is important for interaction with NCK1. Phosphorylation at Tyr-771 and Tyr-857 is important for interaction with RASA1/GAP. Phosphorylation at Tyr-857 is important for efficient phosphorylation of PLCG1 and PTPN11, resulting in increased phosphorylation of AKT1, MAPK1/ERK2 and/or MAPK3/ERK1, PDCD6IP/ALIX and STAM, and in increased cell proliferation. Phosphorylation at Tyr-1009 is important for interaction with PTPN11. Phosphorylation at Tyr-1009 and Tyr-1021 is important for interaction with PLCG1. Phosphorylation at Tyr-1021 is important for interaction with CBL; PLCG1 and CBL compete for the same binding site. Dephosphorylated by PTPRJ at Tyr-751, Tyr-857, Tyr-1009 and Tyr-1021. Dephosphorylated by PTPN2 at Tyr-579 and Tyr-1021. Post-translationally, N-glycosylated. Ubiquitinated. After autophosphorylation, the receptor is polyubiquitinated, leading to its degradation.

The protein resides in the cell membrane. Its subcellular location is the cytoplasmic vesicle. It is found in the lysosome lumen. The catalysed reaction is L-tyrosyl-[protein] + ATP = O-phospho-L-tyrosyl-[protein] + ADP + H(+). Present in an inactive conformation in the absence of bound ligand. Binding of PDGFB and/or PDGFD leads to dimerization and activation by autophosphorylation on tyrosine residues. Inhibited by imatinib. In terms of biological role, tyrosine-protein kinase that acts as a cell-surface receptor for homodimeric PDGFB and PDGFD and for heterodimers formed by PDGFA and PDGFB, and plays an essential role in the regulation of embryonic development, cell proliferation, survival, differentiation, chemotaxis and migration. Plays an essential role in blood vessel development by promoting proliferation, migration and recruitment of pericytes and smooth muscle cells to endothelial cells. Plays a role in the migration of vascular smooth muscle cells and the formation of neointima at vascular injury sites. Required for normal development of the cardiovascular system. Required for normal recruitment of pericytes (mesangial cells) in the kidney glomerulus, and for normal formation of a branched network of capillaries in kidney glomeruli. Promotes rearrangement of the actin cytoskeleton and the formation of membrane ruffles. Binding of its cognate ligands - homodimeric PDGFB, heterodimers formed by PDGFA and PDGFB or homodimeric PDGFD -leads to the activation of several signaling cascades; the response depends on the nature of the bound ligand and is modulated by the formation of heterodimers between PDGFRA and PDGFRB. Phosphorylates PLCG1, PIK3R1, PTPN11, RASA1/GAP, CBL, SHC1 and NCK1. Activation of PLCG1 leads to the production of the cellular signaling molecules diacylglycerol and inositol 1,4,5-trisphosphate, mobilization of cytosolic Ca(2+) and the activation of protein kinase C. Phosphorylation of PIK3R1, the regulatory subunit of phosphatidylinositol 3-kinase, leads to the activation of the AKT1 signaling pathway. Phosphorylation of SHC1, or of the C-terminus of PTPN11, creates a binding site for GRB2, resulting in the activation of HRAS, RAF1 and down-stream MAP kinases, including MAPK1/ERK2 and/or MAPK3/ERK1. Promotes phosphorylation and activation of SRC family kinases. Promotes phosphorylation of PDCD6IP/ALIX and STAM. Receptor signaling is down-regulated by protein phosphatases that dephosphorylate the receptor and its down-stream effectors, and by rapid internalization of the activated receptor. The sequence is that of Platelet-derived growth factor receptor beta (PDGFRB) from Homo sapiens (Human).